Consider the following 193-residue polypeptide: Protein PapJ (193 aa).

The first 27 residues, 1–27 (MVVNKTTAVLYLIALSLSGFIHTFLRA), serve as a signal peptide directing secretion.

It is found in the periplasm. In terms of biological role, this protein maintains pilus integrity and thus is an important participant in pilus assembly. It may function as molecular chaperone directly or indirectly in the correct assembly of PapA subunits. This Escherichia coli protein is Protein PapJ (papJ).